Here is a 29-residue protein sequence, read N- to C-terminus: Lambda-theraphotoxin-Ec2a (29 aa).

3 disulfides stabilise this stretch: Cys2–Cys16, Cys9–Cys21, and Cys15–Cys25.

It belongs to the neurotoxin 30 (phrixotoxin) family. Expressed by the venom gland.

It localises to the secreted. In terms of biological role, insect-selective neurotoxin that potently blocks insect calcium-activated potassium (BKCa) channels (Slo-type) in cockroach dorsal unpaired median (DUM) neurons (IC(50)=3.7 nM). This occurs in the absence of any shifts in the voltage dependence of activation. At high concentrations (330 nM), it partially inhibits cockroach delayed-rectifier potassium channels (Kv) currents. May interact with the turret and/or loop region of the external entrance to the channel and does not project deeply into the pore of the channel. In vivo, does not show toxicity in mice after intracerebroventricular injection of up to 25 pmol/g (1.8 ug/20 g mouse). The protein is Lambda-theraphotoxin-Ec2a of Eucratoscelus constrictus (African red-rump baboon spider).